The chain runs to 325 residues: Zinc-type alcohol dehydrogenase-like protein C337.11 (325 aa).

Belongs to the zinc-containing alcohol dehydrogenase family. Quinone oxidoreductase subfamily.

It localises to the cytoplasm. It is found in the nucleus. In Schizosaccharomyces pombe (strain 972 / ATCC 24843) (Fission yeast), this protein is Zinc-type alcohol dehydrogenase-like protein C337.11.